Here is a 62-residue protein sequence, read N- to C-terminus: Large ribosomal subunit protein bL28 (62 aa).

The interval 1–28 (MARVCAITGRKARSGNSRSHAMNATKRK) is disordered.

It belongs to the bacterial ribosomal protein bL28 family.

This is Large ribosomal subunit protein bL28 from Bacillus cytotoxicus (strain DSM 22905 / CIP 110041 / 391-98 / NVH 391-98).